The sequence spans 24 residues: RuBisCO large subunit-binding protein subunit beta, chloroplastic (24 aa).

Belongs to the chaperonin (HSP60) family. As to quaternary structure, oligomer of probably six alpha and six beta subunits.

It is found in the plastid. The protein resides in the chloroplast. This protein binds RuBisCO small and large subunits and is implicated in the assembly of the enzyme oligomer. This chain is RuBisCO large subunit-binding protein subunit beta, chloroplastic, found in Populus euphratica (Euphrates poplar).